Here is a 208-residue protein sequence, read N- to C-terminus: MSCINESVCKLCRRENVKLFLKGDRCYTDKCSFERRPYPPGQHGQSRLKFSEFALQLREKQKAKRYYGVSEKQFVKYVGEANRAKELTGHALLKFLETRLDNVVYTLGYANSRREARQLVKHNHFLLNGKRANIPSILVNKGDVIQVAESSREMAKIQSAIQAVARRSVPAWLEADHAKFTGTVKDLPNREDVAVAVEENMIVEYYSR.

The S4 RNA-binding domain maps to 98–164 (TRLDNVVYTL…AKIQSAIQAV (67 aa)).

This sequence belongs to the universal ribosomal protein uS4 family. In terms of assembly, part of the 30S ribosomal subunit. Contacts protein S5. The interaction surface between S4 and S5 is involved in control of translational fidelity.

Functionally, one of the primary rRNA binding proteins, it binds directly to 16S rRNA where it nucleates assembly of the body of the 30S subunit. In terms of biological role, with S5 and S12 plays an important role in translational accuracy. This chain is Small ribosomal subunit protein uS4A, found in Bdellovibrio bacteriovorus (strain ATCC 15356 / DSM 50701 / NCIMB 9529 / HD100).